Reading from the N-terminus, the 622-residue chain is Threonine--tRNA ligase (622 aa).

Residues 1–136 (MKTLLIHSDY…PLSELSRKIT (136 aa)) are editing domain. A catalytic region spans residues 199-498 (PHVKYIKEKE…TLENKPPALP (300 aa)). Zn(2+) contacts are provided by Cys-291, His-343, and His-467.

This sequence belongs to the class-II aminoacyl-tRNA synthetase family. In terms of assembly, homodimer. Zn(2+) serves as cofactor.

It is found in the cytoplasm. It catalyses the reaction tRNA(Thr) + L-threonine + ATP = L-threonyl-tRNA(Thr) + AMP + diphosphate + H(+). Functionally, catalyzes the attachment of threonine to tRNA(Thr) in a two-step reaction: L-threonine is first activated by ATP to form Thr-AMP and then transferred to the acceptor end of tRNA(Thr). Also edits incorrectly charged L-seryl-tRNA(Thr). The sequence is that of Threonine--tRNA ligase from Methanococcus maripaludis (strain DSM 14266 / JCM 13030 / NBRC 101832 / S2 / LL).